A 504-amino-acid chain; its full sequence is Anaerobic nitric oxide reductase transcription regulator NorR (504 aa).

A 4-aspartylphosphate modification is found at Asp57. Positions 187-416 (MIGLSPGMTQ…LEHAIHRAVV (230 aa)) constitute a Sigma-54 factor interaction domain. ATP is bound by residues 215-222 (GETGTGKE) and 278-287 (ADNGTLFLDE). Residues 479 to 498 (WAASARMLETDVANLHRLAK) constitute a DNA-binding region (H-T-H motif).

It participates in nitrogen metabolism; nitric oxide reduction. Functionally, required for the expression of anaerobic nitric oxide (NO) reductase, acts as a transcriptional activator for at least the norVW operon. Activation also requires sigma-54. This chain is Anaerobic nitric oxide reductase transcription regulator NorR, found in Escherichia fergusonii (strain ATCC 35469 / DSM 13698 / CCUG 18766 / IAM 14443 / JCM 21226 / LMG 7866 / NBRC 102419 / NCTC 12128 / CDC 0568-73).